Here is a 181-residue protein sequence, read N- to C-terminus: Ribosome maturation factor RimM (181 aa).

Residues 99 to 172 form the PRC barrel domain; the sequence is EDEFYQVDLI…FLIVDPMAAG (74 aa).

This sequence belongs to the RimM family. In terms of assembly, binds ribosomal protein uS19.

It is found in the cytoplasm. Functionally, an accessory protein needed during the final step in the assembly of 30S ribosomal subunit, possibly for assembly of the head region. Essential for efficient processing of 16S rRNA. May be needed both before and after RbfA during the maturation of 16S rRNA. It has affinity for free ribosomal 30S subunits but not for 70S ribosomes. The polypeptide is Ribosome maturation factor RimM (Bartonella tribocorum (strain CIP 105476 / IBS 506)).